Consider the following 318-residue polypeptide: Methionyl-tRNA formyltransferase (318 aa).

112-115 (SILP) lines the (6S)-5,6,7,8-tetrahydrofolate pocket.

The protein belongs to the Fmt family.

The enzyme catalyses L-methionyl-tRNA(fMet) + (6R)-10-formyltetrahydrofolate = N-formyl-L-methionyl-tRNA(fMet) + (6S)-5,6,7,8-tetrahydrofolate + H(+). Functionally, attaches a formyl group to the free amino group of methionyl-tRNA(fMet). The formyl group appears to play a dual role in the initiator identity of N-formylmethionyl-tRNA by promoting its recognition by IF2 and preventing the misappropriation of this tRNA by the elongation apparatus. This is Methionyl-tRNA formyltransferase from Shewanella baltica (strain OS155 / ATCC BAA-1091).